Consider the following 33-residue polypeptide: Photosystem II reaction center protein Psb30 (33 aa).

The chain crosses the membrane as a helical span at residues 5 to 25 (VIAQLTVLALIVISGPLVIAL).

The protein belongs to the Psb30/Ycf12 family. In terms of assembly, PSII is composed of 1 copy each of membrane proteins PsbA, PsbB, PsbC, PsbD, PsbE, PsbF, PsbH, PsbI, PsbJ, PsbK, PsbL, PsbM, PsbT, PsbX, PsbY, PsbZ, Psb30/Ycf12, peripheral proteins of the oxygen-evolving complex and a large number of cofactors. It forms dimeric complexes.

It is found in the plastid. The protein resides in the chloroplast thylakoid membrane. A core subunit of photosystem II (PSII), probably helps stabilize the reaction center. In Huperzia lucidula (Shining clubmoss), this protein is Photosystem II reaction center protein Psb30.